A 324-amino-acid polypeptide reads, in one-letter code: UDP-N-acetylenolpyruvoylglucosamine reductase (324 aa).

An FAD-binding PCMH-type domain is found at 39–220 (RTGGLAELFY…RAAMHEVALH (182 aa)). Arginine 185 is an active-site residue. Serine 234 (proton donor) is an active-site residue. Glutamate 304 is an active-site residue.

Belongs to the MurB family. Requires FAD as cofactor.

It localises to the cytoplasm. It catalyses the reaction UDP-N-acetyl-alpha-D-muramate + NADP(+) = UDP-N-acetyl-3-O-(1-carboxyvinyl)-alpha-D-glucosamine + NADPH + H(+). It functions in the pathway cell wall biogenesis; peptidoglycan biosynthesis. Functionally, cell wall formation. The protein is UDP-N-acetylenolpyruvoylglucosamine reductase of Bartonella bacilliformis (strain ATCC 35685 / KC583 / Herrer 020/F12,63).